A 496-amino-acid chain; its full sequence is ATP synthase subunit beta (496 aa).

Position 155–162 (155–162) interacts with ATP; it reads GGAGVGKT.

Belongs to the ATPase alpha/beta chains family. In terms of assembly, F-type ATPases have 2 components, CF(1) - the catalytic core - and CF(0) - the membrane proton channel. CF(1) has five subunits: alpha(3), beta(3), gamma(1), delta(1), epsilon(1). CF(0) has three main subunits: a(1), b(2) and c(9-12). The alpha and beta chains form an alternating ring which encloses part of the gamma chain. CF(1) is attached to CF(0) by a central stalk formed by the gamma and epsilon chains, while a peripheral stalk is formed by the delta and b chains.

The protein localises to the cell membrane. The enzyme catalyses ATP + H2O + 4 H(+)(in) = ADP + phosphate + 5 H(+)(out). Produces ATP from ADP in the presence of a proton gradient across the membrane. The catalytic sites are hosted primarily by the beta subunits. This chain is ATP synthase subunit beta, found in Karelsulcia muelleri (strain GWSS) (Sulcia muelleri).